A 507-amino-acid polypeptide reads, in one-letter code: MVTIRADEISNIIRERIEQYNREVKIVNTGTVLQVGDGIARIHGLDEVMAGELVEFEEGTVGIALNLESNNVGVVLMGDGLLIQEGSSVKATGRIAQIPVSEAYLGRVVNALAKPIDGRGEISASEYRLIESPAPGIISRRSVYEPLQTGLIAIDSMIPIGRGQRELIIGDRQTGKTAVATDTILNQQGQNVICVYVAIGQKASSVAQVVTTFQERGAMEYTIVVAEMADSPATLQYLAPYTGAALAEYFMYRERHTSIIYDDPSKQAQAYRQMSLLLRRPPGREAYPGDVFYLHSRLLERAAKLSSRLGEGSMTALPIVETQSGDVSAYIPTNVISITDGQIFLSADLFNAGIRPAINVGISVSRVGSAAQIKAMKQVAGKLKLELAQFAELEAFAQFASDLDKATQNQLARGQRLRELLKQSQSAPLTVEEQIMTIYTGTNGYLDLLEIGQVRKFLVELRTYLKTNKPKFQEIISSTKTFTEEAEALLKEAIQEQTDRFILQEQA.

Residue 170–177 (GDRQTGKT) participates in ATP binding.

This sequence belongs to the ATPase alpha/beta chains family. As to quaternary structure, F-type ATPases have 2 components, CF(1) - the catalytic core - and CF(0) - the membrane proton channel. CF(1) has five subunits: alpha(3), beta(3), gamma(1), delta(1), epsilon(1). CF(0) has four main subunits: a, b, b' and c.

The protein localises to the plastid. The protein resides in the chloroplast thylakoid membrane. It carries out the reaction ATP + H2O + 4 H(+)(in) = ADP + phosphate + 5 H(+)(out). In terms of biological role, produces ATP from ADP in the presence of a proton gradient across the membrane. The alpha chain is a regulatory subunit. This chain is ATP synthase subunit alpha, chloroplastic, found in Panax ginseng (Korean ginseng).